Here is a 292-residue protein sequence, read N- to C-terminus: BTB/POZ domain-containing protein KCTD7 (292 aa).

The segment at 1 to 27 (MVVFSAASDSEKPGDAMSGADKGEEEY) is disordered. The BTB domain maps to 56–144 (IPLNVGGTYF…YAIGPLLENL (89 aa)).

It is found in the cell membrane. Its subcellular location is the cytoplasm. The protein localises to the cytosol. The polypeptide is BTB/POZ domain-containing protein KCTD7 (kctd7) (Danio rerio (Zebrafish)).